We begin with the raw amino-acid sequence, 187 residues long: Threonylcarbamoyl-AMP synthase (187 aa).

A YrdC-like domain is found at 4–187; it reads TLTLSEAVTA…DARSGHILRL (184 aa).

This sequence belongs to the SUA5 family. TsaC subfamily.

It localises to the cytoplasm. It catalyses the reaction L-threonine + hydrogencarbonate + ATP = L-threonylcarbamoyladenylate + diphosphate + H2O. Its function is as follows. Required for the formation of a threonylcarbamoyl group on adenosine at position 37 (t(6)A37) in tRNAs that read codons beginning with adenine. Catalyzes the conversion of L-threonine, HCO(3)(-)/CO(2) and ATP to give threonylcarbamoyl-AMP (TC-AMP) as the acyladenylate intermediate, with the release of diphosphate. This chain is Threonylcarbamoyl-AMP synthase, found in Xylella fastidiosa (strain M12).